The primary structure comprises 124 residues: Fluoride-specific ion channel FluC (124 aa).

Helical transmembrane passes span 4-24, 35-55, 70-90, and 95-115; these read ILFV…ISIF, FGTL…YALG, VGLL…LLLI, and WLKA…MVYL. Na(+)-binding residues include G74 and T77.

This sequence belongs to the fluoride channel Fluc/FEX (TC 1.A.43) family.

The protein localises to the cell inner membrane. The enzyme catalyses fluoride(in) = fluoride(out). Na(+) is not transported, but it plays an essential structural role and its presence is essential for fluoride channel function. Its function is as follows. Fluoride-specific ion channel. Important for reducing fluoride concentration in the cell, thus reducing its toxicity. This chain is Fluoride-specific ion channel FluC, found in Shewanella woodyi (strain ATCC 51908 / MS32).